A 627-amino-acid polypeptide reads, in one-letter code: Myelin-associated glycoprotein (627 aa).

An N-terminal signal peptide occupies residues 1 to 19; that stretch reads MIFLATLPLFWIMISASRG. Positions 20-325 are interaction with RTN4R and RTN4RL2; it reads GHWGAWMPST…RTVELSVMYA (306 aa). The Extracellular portion of the chain corresponds to 20 to 516; the sequence is GHWGAWMPST…HRLMWAKIGP (497 aa). Trp22 is a glycosylation site (C-linked (Man) tryptophan). Residues 22–120 form the Ig-like V-type domain; sequence WGAWMPSTIS…LGGKYYFRGD (99 aa). 3 cysteine pairs are disulfide-bonded: Cys37-Cys165, Cys42-Cys100, and Cys159-Cys217. A ganglioside GT1b (d18:1(4E)) is bound at residue 65-67; that stretch reads YPK. Asn99 is a glycosylation site (N-linked (GlcNAc...) asparagine). A ganglioside GT1b (d18:1(4E)) is bound by residues Arg118 and 124–128; that span reads YNQYT. 4 Ig-like C2-type domains span residues 139 to 237, 241 to 325, 327 to 412, and 413 to 508; these read NTPN…LDVK, VIVE…VMYA, WKPT…VEFA, and PIIL…GAHR. 2 N-linked (GlcNAc...) asparagine glycosylation sites follow: Asn223 and Asn246. Cys261 and Cys305 are oxidised to a cystine. Asn315 and Asn332 each carry an N-linked (GlcNAc...) asparagine glycan. Cys347 and Cys392 form a disulfide bridge. Asn406 carries an N-linked (GlcNAc...) asparagine glycan. Cystine bridges form between Cys421–Cys430 and Cys432–Cys488. N-linked (GlcNAc...) asparagine glycans are attached at residues Asn450 and Asn454. The chain crosses the membrane as a helical span at residues 517-536; sequence VGAVVAFAILIAIVCYITQT. The S-palmitoyl cysteine moiety is linked to residue Cys531. The Cytoplasmic portion of the chain corresponds to 537 to 627; that stretch reads RRKKNVTESS…LAEYAEIRVK (91 aa). Phosphoserine occurs at positions 545, 547, 549, and 591. The tract at residues 578–627 is required for normal axon myelination in the central nervous system; the sequence is LGSERRLLGLRGESPELDLSYSHSDLGKRPTKDSYTLTEELAEYAEIRVK.

Belongs to the immunoglobulin superfamily. SIGLEC (sialic acid binding Ig-like lectin) family. As to quaternary structure, monomer and homodimer. Interacts (via the first three N-terminal Ig-like domains) with RTN4R and RTN4RL2. Interacts with isoform 2 of BSG. Post-translationally, N-glycosylated. In terms of processing, phosphorylated on tyrosine residues. Ubiquitinated, leading to proteasomal degradation. As to expression, detected in the myelin tract in brain, especially in the corpus callosum and in peripheral nerve. Expressed by myelinating glial cells in the central and peripheral nervous system. Detected in oligodendrocyte processes before formation of compact myelin. Restricted to the periaxonal space after myelination. Isoform S-MAG is the predominant isoform in CNS and PNS of the adult (at protein level).

The protein localises to the cell membrane. Its subcellular location is the membrane raft. Adhesion molecule that mediates interactions between myelinating cells and neurons by binding to neuronal sialic acid-containing gangliosides and to the glycoproteins RTN4R and RTN4RL2. Not required for initial myelination, but seems to play a role in the maintenance of normal axon myelination. Protects motoneurons against apoptosis, also after injury; protection against apoptosis is probably mediated via interaction with neuronal RTN4R and RTN4RL2. Required to prevent degeneration of myelinated axons in adults; this probably depends on binding to gangliosides on the axon cell membrane. Negative regulator of neurite outgrowth that inhibits axon longitudinal growth. Negative regulator of neurite outgrowth; in dorsal root ganglion neurons the inhibition is mediated primarily via binding to neuronal RTN4R or RTN4RL2 and to a lesser degree via binding to neuronal gangliosides. In cerebellar granule cells the inhibition is mediated via binding to neuronal gangliosides. In sensory neurons, inhibition of neurite extension depends only partially on RTN4R, RTN4RL2 and gangliosides. Inhibits axon outgrowth by binding to RTN4R. Preferentially binds to alpha-2,3-linked sialic acid. Binds ganglioside Gt1b. This is Myelin-associated glycoprotein (Mag) from Mus musculus (Mouse).